The chain runs to 304 residues: Phosphoribosylaminoimidazole-succinocarboxamide synthase (304 aa).

This sequence belongs to the SAICAR synthetase family.

The enzyme catalyses 5-amino-1-(5-phospho-D-ribosyl)imidazole-4-carboxylate + L-aspartate + ATP = (2S)-2-[5-amino-1-(5-phospho-beta-D-ribosyl)imidazole-4-carboxamido]succinate + ADP + phosphate + 2 H(+). It functions in the pathway purine metabolism; IMP biosynthesis via de novo pathway; 5-amino-1-(5-phospho-D-ribosyl)imidazole-4-carboxamide from 5-amino-1-(5-phospho-D-ribosyl)imidazole-4-carboxylate: step 1/2. This chain is Phosphoribosylaminoimidazole-succinocarboxamide synthase, found in Corynebacterium efficiens (strain DSM 44549 / YS-314 / AJ 12310 / JCM 11189 / NBRC 100395).